Reading from the N-terminus, the 417-residue chain is Phosphoglycerate kinase (417 aa).

Val-23, Asp-24, Phe-25, Asn-26, Gln-39, Arg-40, Ser-63, His-64, Gly-66, Arg-67, Leu-122, Arg-123, His-170, and Arg-171 together coordinate (2R)-3-phosphoglycerate. Gly-214 is an ADP binding site. Gly-214 contributes to the CDP binding site. Ala-215 and Lys-216 together coordinate AMP. An ATP-binding site is contributed by Ala-215. Mg(2+) is bound at residue Ala-215. Asp-219 serves as a coordination point for CDP. Asp-219 provides a ligand contact to Mg(2+). Position 220 (Lys-220) interacts with AMP. Lys-220 is an ATP binding site. Position 238 (Gly-238) interacts with ADP. Gly-238 contributes to the CDP binding site. Residues Ala-239 and Gly-313 each contribute to the AMP site. Residues Ala-239 and Gly-313 each coordinate ATP. Gly-338 and Phe-343 together coordinate CDP. Position 343 (Phe-343) interacts with ADP. Glu-344 provides a ligand contact to AMP. Positions 344, 375, and 376 each coordinate ATP. Asp-375 provides a ligand contact to Mg(2+).

Belongs to the phosphoglycerate kinase family. As to quaternary structure, monomer. Mg(2+) serves as cofactor.

The protein resides in the cytoplasm. The protein localises to the mitochondrion. The enzyme catalyses (2R)-3-phosphoglycerate + ATP = (2R)-3-phospho-glyceroyl phosphate + ADP. The protein operates within carbohydrate degradation; glycolysis; pyruvate from D-glyceraldehyde 3-phosphate: step 2/5. In terms of biological role, catalyzes one of the two ATP producing reactions in the glycolytic pathway via the reversible conversion of 1,3-diphosphoglycerate to 3-phosphoglycerate. Both L- and D- forms of purine and pyrimidine nucleotides can be used as substrates, but the activity is much lower on pyrimidines. Negatively regulates the biosynthesis of acetyl-CoA from pyruvate in the mitochondrion. The protein is Phosphoglycerate kinase (pgkA) of Aspergillus oryzae (strain ATCC 42149 / RIB 40) (Yellow koji mold).